A 381-amino-acid chain; its full sequence is Alkanesulfonate monooxygenase (381 aa).

It belongs to the SsuD family. In terms of assembly, homotetramer.

The enzyme catalyses an alkanesulfonate + FMNH2 + O2 = an aldehyde + FMN + sulfite + H2O + 2 H(+). Its function is as follows. Catalyzes the desulfonation of aliphatic sulfonates. This chain is Alkanesulfonate monooxygenase, found in Shigella flexneri.